A 147-amino-acid polypeptide reads, in one-letter code: Hemoglobin subunit beta (147 aa).

Val-2 is subject to N-acetylvaline. Residues 3–147 (HLTPEEKSAV…VANALAHKYH (145 aa)) enclose the Globin domain. Thr-13 is subject to Phosphothreonine. Position 45 is a phosphoserine (Ser-45). At Lys-60 the chain carries N6-acetyllysine. His-64 provides a ligand contact to heme b. N6-acetyllysine is present on Lys-83. His-93 serves as a coordination point for heme b. The residue at position 94 (Cys-94) is an S-nitrosocysteine. The residue at position 145 (Lys-145) is an N6-acetyllysine.

This sequence belongs to the globin family. Heterotetramer of two alpha chains and two beta chains in adult hemoglobin A (HbA). In terms of tissue distribution, red blood cells.

In terms of biological role, involved in oxygen transport from the lung to the various peripheral tissues. This Pan paniscus (Pygmy chimpanzee) protein is Hemoglobin subunit beta (HBB).